The primary structure comprises 1069 residues: DNA annealing helicase and endonuclease ZRANB3 (1069 aa).

The Helicase ATP-binding domain occupies 46 to 208; that stretch reads VFALRRDGRC…FMQIEALFPQ (163 aa). A DNA annealing helicase activity region spans residues 46-481; it reads VFALRRDGRC…GRKEKLQATE (436 aa). 59–66 is a binding site for ATP; the sequence is DEMGLGKT. The DEAH box motif lies at 157–160; that stretch reads DESH. The Helicase C-terminal domain maps to 325–485; it reads AVKDYIKMLL…KLQATEDDKE (161 aa). The short motif at 518–525 is the PIP-box element; it reads QHDIRSFF. A RanBP2-type zinc finger spans residues 617-646; it reads PEKGWQCGFCTFLNNPGLPYCEMCENPRSR. The tract at residues 648–720 is disordered; the sequence is AGRNHLQDNN…PEIGQLNNSG (73 aa). Basic and acidic residues-rich tracts occupy residues 652–661 and 677–707; these read HLQDNNKNDE and ECERQCPERLEAEQSANSKEEALEGGGEDRL. Residues 1001–1041 enclose the HNH domain; it reads PGEGHFWQVDHIRPVYEGGGQCSLDNLQTLCTVCHKERTAQ. The interval 1001–1069 is endonuclease activity; it reads PGEGHFWQVD…SDITRFLVKK (69 aa). The APIM motif motif lies at 1064–1068; sequence RFLVK.

The protein belongs to the SNF2/RAD54 helicase family. In terms of assembly, interacts (via PIP-box and RanBP2-type zinc finger) with PCNA (when PCNA is polyubiquitinated via 'Lys-63'-linked polyubiquitin).

The protein resides in the nucleus. Its subcellular location is the chromosome. Functionally, DNA annealing helicase and endonuclease required to maintain genome stability at stalled or collapsed replication forks by facilitating fork restart and limiting inappropriate recombination that could occur during template switching events. Recruited to the sites of stalled DNA replication by polyubiquitinated PCNA and acts as a structure-specific endonuclease that cleaves the replication fork D-loop intermediate, generating an accessible 3'-OH group in the template of the leading strand, which is amenable to extension by DNA polymerase. In addition to endonuclease activity, also catalyzes the fork regression via annealing helicase activity in order to prevent disintegration of the replication fork and the formation of double-strand breaks. The sequence is that of DNA annealing helicase and endonuclease ZRANB3 (Zranb3) from Mus musculus (Mouse).